Here is a 349-residue protein sequence, read N- to C-terminus: S-adenosylmethionine:tRNA ribosyltransferase-isomerase (349 aa).

The protein belongs to the QueA family. In terms of assembly, monomer.

The protein resides in the cytoplasm. The catalysed reaction is 7-aminomethyl-7-carbaguanosine(34) in tRNA + S-adenosyl-L-methionine = epoxyqueuosine(34) in tRNA + adenine + L-methionine + 2 H(+). It participates in tRNA modification; tRNA-queuosine biosynthesis. Its function is as follows. Transfers and isomerizes the ribose moiety from AdoMet to the 7-aminomethyl group of 7-deazaguanine (preQ1-tRNA) to give epoxyqueuosine (oQ-tRNA). The chain is S-adenosylmethionine:tRNA ribosyltransferase-isomerase from Pseudomonas putida (strain GB-1).